Here is an 862-residue protein sequence, read N- to C-terminus: Eukaryotic translation initiation factor 3 subunit C (862 aa).

The segment at 1–81 (MSSRFFYGGG…EEEEKVTVVK (81 aa)) is disordered. A compositionally biased stretch (acidic residues) spans 17–54 (SSDEEELYSDREEEEKSEEEESSEEEDETSEEEESDEE). The segment covering 55–65 (TGAKKFLKDVA) has biased composition (basic and acidic residues). Over residues 66 to 75 (SDSEEEEEEE) the composition is skewed to acidic residues. The region spanning 600 to 774 (FHMHINLELL…NAIVFRKGVE (175 aa)) is the PCI domain. The disordered stretch occupies residues 813-862 (RDQGAGARGGRGSGRGGQARGGPRFPGGQQGRRPGGQQFGGGALGGAIKA). Gly residues predominate over residues 818-862 (GARGGRGSGRGGQARGGPRFPGGQQGRRPGGQQFGGGALGGAIKA).

The protein belongs to the eIF-3 subunit C family. As to quaternary structure, component of the eukaryotic translation initiation factor 3 (eIF-3) complex.

The protein localises to the cytoplasm. Component of the eukaryotic translation initiation factor 3 (eIF-3) complex, which is involved in protein synthesis of a specialized repertoire of mRNAs and, together with other initiation factors, stimulates binding of mRNA and methionyl-tRNAi to the 40S ribosome. The eIF-3 complex specifically targets and initiates translation of a subset of mRNAs involved in cell proliferation. This Neosartorya fischeri (strain ATCC 1020 / DSM 3700 / CBS 544.65 / FGSC A1164 / JCM 1740 / NRRL 181 / WB 181) (Aspergillus fischerianus) protein is Eukaryotic translation initiation factor 3 subunit C (nip1).